We begin with the raw amino-acid sequence, 67 residues long: Large ribosomal subunit protein uL29 (67 aa).

The protein belongs to the universal ribosomal protein uL29 family.

The sequence is that of Large ribosomal subunit protein uL29 from Cereibacter sphaeroides (strain ATCC 17025 / ATH 2.4.3) (Rhodobacter sphaeroides).